A 215-amino-acid chain; its full sequence is LexA repressor (215 aa).

A DNA-binding region (H-T-H motif) is located at residues 28 to 48; that stretch reads RAEIAAELGFSSPNAAEEHLR. Residues Ser133 and Lys170 each act as for autocatalytic cleavage activity in the active site.

This sequence belongs to the peptidase S24 family. Homodimer.

The enzyme catalyses Hydrolysis of Ala-|-Gly bond in repressor LexA.. In terms of biological role, represses a number of genes involved in the response to DNA damage (SOS response), including recA and lexA. In the presence of single-stranded DNA, RecA interacts with LexA causing an autocatalytic cleavage which disrupts the DNA-binding part of LexA, leading to derepression of the SOS regulon and eventually DNA repair. This Burkholderia mallei (strain NCTC 10247) protein is LexA repressor.